The following is a 236-amino-acid chain: MGVEGCTKCIKYLLFVFNFVFWLAGGVILGVALWLRHDPQTTNLLYLELGDKPAPNTFYVGIYILIAVGAVMMFVGFLGCYGAIQESQCLLGTFFTCLVILFACEVAAGIWGFVNKDQIAKDVKQFYDQALQQAVVDDDANNAKAVVKTFHETLDCCGSSTLAALTTSVLKNNLCPSGSNIISNLLKKDCHQKIDELFSGKLYLIGIAAIVVAVIMIFEMILSMVLCCGIRNSSVY.

The Cytoplasmic segment spans residues 1–12 (MGVEGCTKCIKY). A helical transmembrane segment spans residues 13–33 (LLFVFNFVFWLAGGVILGVAL). Over 34–63 (WLRHDPQTTNLLYLELGDKPAPNTFYVGIY) the chain is Extracellular. The helical transmembrane segment at 64–84 (ILIAVGAVMMFVGFLGCYGAI) threads the bilayer. The Cytoplasmic segment spans residues 85–89 (QESQC). A helical transmembrane segment spans residues 90–112 (LLGTFFTCLVILFACEVAAGIWG). Over 113-201 (FVNKDQIAKD…QKIDELFSGK (89 aa)) the chain is Extracellular. Disulfide bonds link Cys-156–Cys-190 and Cys-157–Cys-175. A helical transmembrane segment spans residues 202–224 (LYLIGIAAIVVAVIMIFEMILSM). Glu-219 serves as a coordination point for cholesterol. The Cytoplasmic portion of the chain corresponds to 225–236 (VLCCGIRNSSVY).

It belongs to the tetraspanin (TM4SF) family. As to quaternary structure, homodimer. Part of a complex composed of CD19, CR2/CD21, CD81 and IFITM1/CD225 in the membrane of mature B cells. Interacts (via the second extracellular domain) with CD19; this interaction is initiated early during biosynthesis in the ER and enables trafficking of only properly folded CD19. Part of a complex that includes MHC class II/HLA-DR molecules and IFITM1. Interacts with IFITM1. Interacts with IFITM2 and IFITM3. Part of integrin-tetraspanin complex composed of CD9, CD81, beta-1 and beta-2 integrins in the membrane of monocyte/macrophages. Interacts (via the second extracellular domain) with integrin ITGAV:ITGB3. Interacts with CD247/CD3 zeta, ICAM1 and CD9 at the immune synapse on T cell membrane. Part of a GPCR-tetraspanin complex consisting at least of ADGRG1, CD81, possibly CD9, and GNA11 in which CD81 enhances the association of ADGRG1 with GNA11. Part of a complex composed of CD9, CD81, PTGFRN and IGSF8. Interacts directly with IGSF8. Interacts with CD53 and SCIMP. Interacts with SAMHD1 (via its C-terminus). Interacts with glypican GPC3 and with the transcriptional repressor HHEX; binding to GPC3 decreases the availability of free CD81 for binding to HHEX, resulting in nuclear translocation of HHEX and transcriptional repression. Interacts with CLDN1. Interacts with CLDN6 and CLDN9. In terms of processing, not glycosylated. Likely constitutively palmitoylated at low levels. Protein palmitoylation is up-regulated upon coligation of BCR and CD9-C2R-CD81 complexes in lipid rafts.

Its subcellular location is the cell membrane. It is found in the basolateral cell membrane. Functionally, structural component of specialized membrane microdomains known as tetraspanin-enriched microdomains (TERMs), which act as platforms for receptor clustering and signaling. Essential for trafficking and compartmentalization of CD19 receptor on the surface of activated B cells. Upon initial encounter with microbial pathogens, enables the assembly of CD19-CR2/CD21 and B cell receptor (BCR) complexes at signaling TERMs, lowering the threshold dose of antigen required to trigger B cell clonal expansion and antibody production. In T cells, facilitates the localization of CD247/CD3 zeta at antigen-induced synapses with B cells, providing for costimulation and polarization toward T helper type 2 phenotype. Present in MHC class II compartments, may also play a role in antigen presentation. Can act both as positive and negative regulator of homotypic or heterotypic cell-cell fusion processes. Positively regulates sperm-egg fusion and may be involved in acrosome reaction. In myoblasts, associates with CD9 and PTGFRN and inhibits myotube fusion during muscle regeneration. In macrophages, associates with CD9 and beta-1 and beta-2 integrins, and prevents macrophage fusion into multinucleated giant cells specialized in ingesting complement-opsonized large particles. Also prevents the fusion of mononuclear cell progenitors into osteoclasts in charge of bone resorption. May regulate the compartmentalization of enzymatic activities. In T cells, defines the subcellular localization of dNTPase SAMHD1 and permits its degradation by the proteasome, thereby controlling intracellular dNTP levels. Also involved in cell adhesion and motility. Positively regulates integrin-mediated adhesion of macrophages, particularly relevant for the inflammatory response in the lung. In Chlorocebus aethiops (Green monkey), this protein is CD81 antigen (CD81).